Reading from the N-terminus, the 114-residue chain is Hydrogenase maturation factor HypA (114 aa).

Histidine 2 is a Ni(2+) binding site. The Zn(2+) site is built by cysteine 70, cysteine 73, cysteine 86, and cysteine 89.

The protein belongs to the HypA/HybF family.

Functionally, involved in the maturation of [NiFe] hydrogenases. Required for nickel insertion into the metal center of the hydrogenase. This is Hydrogenase maturation factor HypA from Rippkaea orientalis (strain PCC 8801 / RF-1) (Cyanothece sp. (strain PCC 8801)).